Reading from the N-terminus, the 191-residue chain is Cytochrome c biogenesis ATP-binding export protein CcmA (191 aa).

In terms of domain architecture, ABC transporter spans 2-190; the sequence is LSLHQLQFKN…SIKSAQILRI (189 aa). 29–36 serves as a coordination point for ATP; it reads GANGCGKS.

Belongs to the ABC transporter superfamily. CcmA exporter (TC 3.A.1.107) family. In terms of assembly, the complex is composed of two ATP-binding proteins (CcmA) and two transmembrane proteins (CcmB).

It localises to the cell inner membrane. The catalysed reaction is heme b(in) + ATP + H2O = heme b(out) + ADP + phosphate + H(+). Its function is as follows. Part of the ABC transporter complex CcmAB involved in the biogenesis of c-type cytochromes; once thought to export heme, this seems not to be the case, but its exact role is uncertain. Responsible for energy coupling to the transport system. This chain is Cytochrome c biogenesis ATP-binding export protein CcmA, found in Rickettsia conorii (strain ATCC VR-613 / Malish 7).